A 69-amino-acid chain; its full sequence is Neurotoxin Cex3 (69 aa).

A signal peptide is located at residue Ala-1. The region spanning 2–67 (KDGYLVNKST…TYPLPNKSCG (66 aa)) is the LCN-type CS-alpha/beta domain. 4 disulfide bridges follow: Cys-13-Cys-66, Cys-17-Cys-42, Cys-26-Cys-47, and Cys-30-Cys-49. A Cysteine amide modification is found at Cys-66. The propeptide occupies 67-69 (GRK).

The protein belongs to the long (4 C-C) scorpion toxin superfamily. Sodium channel inhibitor family. Beta subfamily. As to expression, expressed by the venom gland.

The protein localises to the secreted. Its function is as follows. Beta toxins bind voltage-independently at site-4 of sodium channels (Nav) and shift the voltage of activation toward more negative potentials thereby affecting sodium channel activation and promoting spontaneous and repetitive firing. The chain is Neurotoxin Cex3 from Centruroides exilicauda (Bark scorpion).